Here is a 284-residue protein sequence, read N- to C-terminus: Lipoyl synthase (284 aa).

[4Fe-4S] cluster-binding residues include Cys36, Cys41, Cys47, Cys62, Cys66, Cys69, and Ser273. A Radical SAM core domain is found at 48 to 262 (WGKGTATFMI…RTIGLKKGFR (215 aa)).

It belongs to the radical SAM superfamily. Lipoyl synthase family. It depends on [4Fe-4S] cluster as a cofactor.

Its subcellular location is the cytoplasm. The catalysed reaction is [[Fe-S] cluster scaffold protein carrying a second [4Fe-4S](2+) cluster] + N(6)-octanoyl-L-lysyl-[protein] + 2 oxidized [2Fe-2S]-[ferredoxin] + 2 S-adenosyl-L-methionine + 4 H(+) = [[Fe-S] cluster scaffold protein] + N(6)-[(R)-dihydrolipoyl]-L-lysyl-[protein] + 4 Fe(3+) + 2 hydrogen sulfide + 2 5'-deoxyadenosine + 2 L-methionine + 2 reduced [2Fe-2S]-[ferredoxin]. It functions in the pathway protein modification; protein lipoylation via endogenous pathway; protein N(6)-(lipoyl)lysine from octanoyl-[acyl-carrier-protein]: step 2/2. Functionally, catalyzes the radical-mediated insertion of two sulfur atoms into the C-6 and C-8 positions of the octanoyl moiety bound to the lipoyl domains of lipoate-dependent enzymes, thereby converting the octanoylated domains into lipoylated derivatives. This Phocaeicola vulgatus (strain ATCC 8482 / DSM 1447 / JCM 5826 / CCUG 4940 / NBRC 14291 / NCTC 11154) (Bacteroides vulgatus) protein is Lipoyl synthase.